Here is a 384-residue protein sequence, read N- to C-terminus: S-adenosylmethionine synthase (384 aa).

His-15 lines the ATP pocket. Residue Asp-17 coordinates Mg(2+). Glu-43 lines the K(+) pocket. Positions 56 and 99 each coordinate L-methionine. The flexible loop stretch occupies residues 99-109 (QSADINQGVDR). ATP is bound by residues 164–166 (DAK), 230–231 (RF), Asp-239, 245–246 (RK), Ala-262, and Lys-266. Residue Asp-239 coordinates L-methionine. Lys-270 contacts L-methionine.

This sequence belongs to the AdoMet synthase family. Homotetramer; dimer of dimers. Mg(2+) is required as a cofactor. K(+) serves as cofactor.

The protein localises to the cytoplasm. The catalysed reaction is L-methionine + ATP + H2O = S-adenosyl-L-methionine + phosphate + diphosphate. Its pathway is amino-acid biosynthesis; S-adenosyl-L-methionine biosynthesis; S-adenosyl-L-methionine from L-methionine: step 1/1. Functionally, catalyzes the formation of S-adenosylmethionine (AdoMet) from methionine and ATP. The overall synthetic reaction is composed of two sequential steps, AdoMet formation and the subsequent tripolyphosphate hydrolysis which occurs prior to release of AdoMet from the enzyme. The chain is S-adenosylmethionine synthase from Haemophilus influenzae (strain 86-028NP).